Here is a 544-residue protein sequence, read N- to C-terminus: Lysophosphatidylcholine acyltransferase 2 (544 aa).

The Cytoplasmic segment spans residues 1-58; it reads MNRCAEAAAVAATVPGSGVGDSGLRPPMVPRQASFFPPPVPNPFVQQTRISAARRLQM. The helical; Signal-anchor for type II membrane protein transmembrane segment at 59–79 threads the bilayer; sequence ILLGIILLPVRALLVGLVLLL. The Lumenal portion of the chain corresponds to 80–544; it reads AWPFAVISTV…EEGTSGKKVD (465 aa). Residues 146 to 151 carry the HXXXXD motif motif; the sequence is HSTFFD. The EGTC motif signature appears at 220 to 223; the sequence is EGTC. 2 EF-hand domains span residues 391-426 and 428-463; these read PVSD…LCNP and NTED…SLGV. The Ca(2+) site is built by Asp404, Asn406, Asp408, Ser410, Glu415, Asp441, Asp443, Asp445, Tyr447, and Glu452. Positions 520-530 are enriched in polar residues; the sequence is TAPSVASNKVS. Residues 520 to 544 form a disordered region; it reads TAPSVASNKVSPESHEEGTSGKKVD. The span at 531–544 shows a compositional bias: basic and acidic residues; sequence PESHEEGTSGKKVD.

Belongs to the 1-acyl-sn-glycerol-3-phosphate acyltransferase family.

It is found in the endoplasmic reticulum membrane. The protein resides in the golgi apparatus membrane. It localises to the cell membrane. Its subcellular location is the lipid droplet. The catalysed reaction is a 1-acyl-sn-glycero-3-phosphocholine + an acyl-CoA = a 1,2-diacyl-sn-glycero-3-phosphocholine + CoA. It carries out the reaction a 1-O-alkyl-sn-glycero-3-phosphocholine + acetyl-CoA = a 1-O-alkyl-2-acetyl-sn-glycero-3-phosphocholine + CoA. The enzyme catalyses a 1-acyl-sn-glycero-3-phosphate + an acyl-CoA = a 1,2-diacyl-sn-glycero-3-phosphate + CoA. It catalyses the reaction a 1-O-(1Z-alkenyl)-sn-glycero-3-phosphocholine + an acyl-CoA = a 1-O-(1Z-alkenyl)-2-acyl-sn-glycero-3-phosphocholine + CoA. The catalysed reaction is 1-hexadecanoyl-sn-glycero-3-phosphate + (9Z)-octadecenoyl-CoA = 1-hexadecanoyl-2-(9Z-octadecenoyl)-sn-glycero-3-phosphate + CoA. It carries out the reaction 1-(9Z-octadecenoyl)-sn-glycero-3-phosphate + (9Z)-octadecenoyl-CoA = 1,2-di-(9Z-octadecenoyl)-sn-glycero-3-phosphate + CoA. The enzyme catalyses 1-(9Z-octadecenoyl)-sn-glycero-3-phosphate + hexadecanoyl-CoA = 1-(9Z)-octadecenoyl-2-hexadecanoyl-sn-glycero-3-phosphate + CoA. It catalyses the reaction 1-heptadecanoyl-sn-glycero-3-phosphate + (9Z)-octadecenoyl-CoA = 1-heptadecanoyl-2-(9Z)-octadecenoyl-sn-glycero-3-phosphate + CoA. The catalysed reaction is 1-octadecanoyl-sn-glycero-3-phosphate + (9Z)-octadecenoyl-CoA = 1-octadecanoyl-2-(9Z-octadecenoyl)-sn-glycero-3-phosphate + CoA. It carries out the reaction heptadecanoyl-CoA + 1-(9Z-octadecenoyl)-sn-glycero-3-phosphate = 1-(9Z)-octadecenoyl-2-heptadecanoyl-sn-glycero-3-phosphate + CoA. The enzyme catalyses 1-(9Z-octadecenoyl)-sn-glycero-3-phosphate + (9Z,12Z)-octadecadienoyl-CoA = 1-(9Z)-octadecenoyl-2-(9Z,12Z)-octadecadienoyl-sn-glycero-3-phosphate + CoA. It catalyses the reaction 1-(9Z-octadecenoyl)-sn-glycero-3-phosphate + tetradecanoyl-CoA = 1-(9Z)-octadecenoyl-2-tetradecanoyl-sn-glycero-3-phosphate + CoA. The catalysed reaction is pentadecanoyl-CoA + 1-(9Z-octadecenoyl)-sn-glycero-3-phosphate = 1-(9Z)-octadecenoyl-2-pentadecanoyl-sn-glycero-3-phosphate + CoA. It carries out the reaction nonadecanoyl-CoA + 1-(9Z-octadecenoyl)-sn-glycero-3-phosphate = 1-(9Z)-octadecenoyl-2-nonadecanoyl-sn-glycero-3-phosphate + CoA. The enzyme catalyses 1-hexadecanoyl-sn-glycero-3-phosphocholine + (9Z)-octadecenoyl-CoA = 1-hexadecanoyl-2-(9Z-octadecenoyl)-sn-glycero-3-phosphocholine + CoA. It catalyses the reaction 1-O-hexadecyl-sn-glycero-3-phosphocholine + acetyl-CoA = 1-O-hexadecyl-2-acetyl-sn-glycero-3-phosphocholine + CoA. The catalysed reaction is 1-O-octadecyl-sn-glycero-3-phosphocholine + acetyl-CoA = 1-O-octadecyl-2-acetyl-sn-glycero-3-phosphocholine + CoA. It carries out the reaction 1-hexadecanoyl-sn-glycero-3-phosphocholine + acetyl-CoA = 1-hexadecanoyl-2-acetyl-sn-glycero-3-phosphocholine + CoA. The enzyme catalyses 1-octadecanoyl-sn-glycero-3-phosphocholine + acetyl-CoA = 1-octadecanoyl-2-acetyl-sn-glycero-3-phosphocholine + CoA. It catalyses the reaction a 1-O-(1Z-alkenyl)-sn-glycero-3-phosphocholine + acetyl-CoA = 1-O-(1Z)-alkenyl-2-acetyl-sn-glycero-3-phosphocholine + CoA. The catalysed reaction is 1-O-octadecyl-sn-glycero-3-phosphocholine + (5Z,8Z,11Z,14Z)-eicosatetraenoyl-CoA = 1-O-octadecyl-2-(5Z,8Z,11Z,14Z)-eicosatetraenoyl-sn-glycero-3-phosphocholine + CoA. The protein operates within lipid metabolism; phospholipid metabolism. In terms of biological role, exhibits both acyltransferase and acetyltransferase activities. Activity is calcium-dependent. Catalyzes the conversion of lysophosphatidylcholine (1-acyl-sn-glycero-3-phosphocholine or LPC) into phosphatidylcholine (1,2-diacyl-sn-glycero-3-phosphocholine or PC). Catalyzes the conversion 1-acyl-sn-glycerol-3-phosphate (lysophosphatidic acid or LPA) into 1,2-diacyl-sn-glycerol-3-phosphate (phosphatidic acid or PA) by incorporating an acyl moiety at the sn-2 position of the glycerol backbone. Involved in platelet-activating factor (PAF) biosynthesis by catalyzing the conversion of the PAF precursor, 1-O-alkyl-sn-glycero-3-phosphocholine (lyso-PAF) into 1-O-alkyl-2-acetyl-sn-glycero-3-phosphocholine (PAF). Also converts lyso-PAF to 1-O-alkyl-2-acyl-sn-glycero-3-phosphocholine (PC), a major component of cell membranes and a PAF precursor. Under resting conditions, acyltransferase activity is preferred. Upon acute inflammatory stimulus, acetyltransferase activity is enhanced and PAF synthesis increases. Involved in the regulation of lipid droplet number and size. The chain is Lysophosphatidylcholine acyltransferase 2 (Lpcat2) from Rattus norvegicus (Rat).